We begin with the raw amino-acid sequence, 414 residues long: Serine/threonine transporter SstT (414 aa).

Topologically, residues 2-15 (TTQHSPGLFRRLAH) are cytoplasmic. A helical transmembrane segment spans residues 16 to 36 (GSLVKQILAGLILGILLAWIS). Over 37–45 (KPAAEAVGL) the chain is Periplasmic. The chain crosses the membrane as a helical span at residues 46–66 (LGTLFVGALKAVAPILVLMLV). The Cytoplasmic portion of the chain corresponds to 67 to 83 (MASIANHQHGQKTNIRP). Residues 84 to 104 (ILFLYLLGTFSAALAAVIFSF) form a helical membrane-spanning segment. Over 105-142 (AFPSTLHLSSSAGDISPPSGIVEVMRGLVMSMVSNPID) the chain is Periplasmic. The helical transmembrane segment at 143–163 (ALLKGNYIGILVWAIGLGFAL) threads the bilayer. Over 164–179 (RHGNETTKNLVNDMSN) the chain is Cytoplasmic. A helical membrane pass occupies residues 180–200 (AVTFMVKLVIHFAPIGIFGLV). Topologically, residues 201–217 (SSTLATTGFSTLWGYAQ) are periplasmic. The chain crosses the membrane as a helical span at residues 218–238 (LLVVLVGCMLLVALVVNPLLV). The Cytoplasmic segment spans residues 239 to 299 (WWKIRRNPFP…VSIPLGATIN (61 aa)). Residues 300–320 (MAGAAITITVLTLAAVNTLGI) form a helical membrane-spanning segment. The Periplasmic segment spans residues 321–331 (PVDLPTALLLS). The helical transmembrane segment at 332–352 (VVASLCACGASGVAGGSLLLI) threads the bilayer. The Cytoplasmic portion of the chain corresponds to 353 to 414 (PLACNMFGIS…DRLANSALRN (62 aa)).

It belongs to the dicarboxylate/amino acid:cation symporter (DAACS) (TC 2.A.23) family.

It localises to the cell inner membrane. The enzyme catalyses L-serine(in) + Na(+)(in) = L-serine(out) + Na(+)(out). The catalysed reaction is L-threonine(in) + Na(+)(in) = L-threonine(out) + Na(+)(out). Its function is as follows. Involved in the import of serine and threonine into the cell, with the concomitant import of sodium (symport system). The polypeptide is Serine/threonine transporter SstT (Escherichia coli (strain UTI89 / UPEC)).